Reading from the N-terminus, the 259-residue chain is Borneol dehydrogenase, mitochondrial (259 aa).

The N-terminal 30 residues, 1 to 30 (MASTVLRRLEGKVALITGAASGIGESAARL), are a transit peptide targeting the mitochondrion. NAD(+)-binding positions include 21–23 (SGI), aspartate 42, 63–64 (DV), and 90–92 (NAG). Serine 144 acts as the Proton donor in catalysis. Substrate is bound by residues serine 144 and tyrosine 157. The NAD(+) site is built by tyrosine 157, lysine 161, and threonine 192. Tyrosine 157 (proton acceptor) is an active-site residue. The active-site Proton donor/acceptor is lysine 161.

This sequence belongs to the short-chain dehydrogenases/reductases (SDR) family. As to expression, specifically expressed in glandular trichomes of mature flowers.

The protein localises to the mitochondrion. The catalysed reaction is borneol + NAD(+) = camphor + NADH + H(+). It functions in the pathway secondary metabolite biosynthesis; terpenoid biosynthesis. Its function is as follows. Involved in the biosynthesis of monoterpenes natural products related to camphor. Catalyzes the conversion of borneol into camphor. This chain is Borneol dehydrogenase, mitochondrial, found in Lavandula x intermedia (Lavandin).